Reading from the N-terminus, the 542-residue chain is Putative serine/threonine-protein kinase L205 (542 aa).

Residues 20 to 30 show a composition bias toward basic and acidic residues; it reads FEKKSVGHNSD. The disordered stretch occupies residues 20–49; the sequence is FEKKSVGHNSDDEYDDTVPYNEDDETSEEE. Residues 31–49 show a composition bias toward acidic residues; that stretch reads DEYDDTVPYNEDDETSEEE. Positions 69–538 constitute a Protein kinase domain; that stretch reads YLLLKKIGSG…ADELLKHPWL (470 aa). Residues 75–83 and Lys-98 each bind ATP; that span reads IGSGNNASV. Residue Asp-201 is the Proton acceptor of the active site. Residues 278-314 are disordered; the sequence is EELIPDDPDNNEKYYDSTDSEEYDYSDNSDYYDDDED. A compositionally biased stretch (acidic residues) spans 295–314; it reads TDSEEYDYSDNSDYYDDDED.

Belongs to the protein kinase superfamily. Ser/Thr protein kinase family.

The catalysed reaction is L-seryl-[protein] + ATP = O-phospho-L-seryl-[protein] + ADP + H(+). The enzyme catalyses L-threonyl-[protein] + ATP = O-phospho-L-threonyl-[protein] + ADP + H(+). The polypeptide is Putative serine/threonine-protein kinase L205 (Acanthamoeba polyphaga (Amoeba)).